The following is a 510-amino-acid chain: Maturase K (510 aa).

It belongs to the intron maturase 2 family. MatK subfamily.

Its subcellular location is the plastid. It is found in the chloroplast. Usually encoded in the trnK tRNA gene intron. Probably assists in splicing its own and other chloroplast group II introns. This Cestrum elegans (Red cestrum) protein is Maturase K.